The following is a 256-amino-acid chain: Extracellular serine-rich protein ARB_03024 (256 aa).

The N-terminal stretch at 1-19 is a signal peptide; the sequence is MVATKSVLSAVALAGVAAA. A disordered region spans residues 135-235; that stretch reads KIVPQSGSPT…TPTASPGAAA (101 aa). Gly residues predominate over residues 149-159; the sequence is GTLGGSGGSGG. 2 stretches are compositionally biased toward low complexity: residues 160–204 and 215–235; these read SSSS…QSTP and PSAT…GAAA. Residue alanine 233 is the site of GPI-anchor amidated alanine attachment. Positions 234–256 are cleaved as a propeptide — removed in mature form; that stretch reads AAGLKGSAVLAGVVALGAWIGLL.

It localises to the cell membrane. Its subcellular location is the secreted. The protein is Extracellular serine-rich protein ARB_03024 of Arthroderma benhamiae (strain ATCC MYA-4681 / CBS 112371) (Trichophyton mentagrophytes).